Here is a 366-residue protein sequence, read N- to C-terminus: tRNA/tmRNA (uracil-C(5))-methyltransferase (366 aa).

The S-adenosyl-L-methionine site is built by Q190, Y218, N223, E239, and D299. C324 (nucleophile) is an active-site residue. The active-site Proton acceptor is E358.

It belongs to the class I-like SAM-binding methyltransferase superfamily. RNA M5U methyltransferase family. TrmA subfamily.

It carries out the reaction uridine(54) in tRNA + S-adenosyl-L-methionine = 5-methyluridine(54) in tRNA + S-adenosyl-L-homocysteine + H(+). The enzyme catalyses uridine(341) in tmRNA + S-adenosyl-L-methionine = 5-methyluridine(341) in tmRNA + S-adenosyl-L-homocysteine + H(+). Its function is as follows. Dual-specificity methyltransferase that catalyzes the formation of 5-methyluridine at position 54 (m5U54) in all tRNAs, and that of position 341 (m5U341) in tmRNA (transfer-mRNA). In Escherichia coli O6:H1 (strain CFT073 / ATCC 700928 / UPEC), this protein is tRNA/tmRNA (uracil-C(5))-methyltransferase.